Here is a 320-residue protein sequence, read N- to C-terminus: Mitochondrial fission regulator 1-like-B (320 aa).

A disordered region spans residues methionine 1–threonine 37. Residues glutamate 9 to arginine 30 are compositionally biased toward basic and acidic residues.

Belongs to the MTFR1 family.

Its subcellular location is the mitochondrion outer membrane. In terms of biological role, mitochondrial protein required for adaptation of miochondrial dynamics to metabolic changes. Regulates mitochondrial morphology at steady state and mediates AMPK-dependent stress-induced mitochondrial fragmentation via the control of OPA1 levels. This is Mitochondrial fission regulator 1-like-B (mtfr1l-b) from Xenopus laevis (African clawed frog).